A 541-amino-acid chain; its full sequence is 2-hydroxyacylsphingosine 1-beta-galactosyltransferase (541 aa).

The signal sequence occupies residues 1 to 20 (MKSYTPYFMLLWSAVGIARA). N-linked (GlcNAc...) asparagine glycosylation is found at N78, N333, and N442. A helical membrane pass occupies residues 472–492 (YFLLDIAFVLLLGAVALYFIV).

It belongs to the UDP-glycosyltransferase family. As to expression, brain, restricted to the oligodendrocyte-containing cell layers of cerebrum and cerebellum.

It is found in the membrane. The protein localises to the endoplasmic reticulum. It carries out the reaction an N-acylsphing-4-enine + UDP-alpha-D-galactose = a beta-D-galactosyl-(1&lt;-&gt;1')-N-acylsphing-4-enine + UDP + H(+). It catalyses the reaction N-(2-hydroxy-hexanoyl)-sphing-4-enine + UDP-alpha-D-galactose = N-(2-hydroxy-hexanoyl)-beta-D-galactosyl-sphing-4-enine + UDP + H(+). The catalysed reaction is N-(2-hydroxy-hexanoyl)-sphinganine + UDP-alpha-D-galactose = N-(2-hydroxyhexanoyl)-beta-D-galactosylsphinganine + UDP + H(+). The enzyme catalyses an N-acyl-sphingoid base + UDP-alpha-D-galactose = a D-galactosylceramide + UDP + H(+). It participates in sphingolipid metabolism; galactosylceramide biosynthesis. Functionally, catalyzes the transfer of galactose to ceramide, a key enzymatic step in the biosynthesis of galactocerebrosides, which are abundant sphingolipids of the myelin membrane of the central nervous system and peripheral nervous system. Galactosylates both hydroxy- and non-hydroxy fatty acid-containing ceramides and diglycerides. This Rattus norvegicus (Rat) protein is 2-hydroxyacylsphingosine 1-beta-galactosyltransferase.